Consider the following 157-residue polypeptide: uncharacterized protein (157 aa).

This is an uncharacterized protein from Lepidoptera (butterflies and moths).